Here is a 145-residue protein sequence, read N- to C-terminus: Photosystem I reaction center subunit VI-1, chloroplastic (145 aa).

A chloroplast-targeting transit peptide spans 1 to 50 (MASLATVAAVKPSAAIKGLGGSSLAGAKLSIKPSRLSFKPKSIRANGVVA). Residues 102-118 (LLLKFLILGGGSLLTYV) form a helical membrane-spanning segment.

This sequence belongs to the psaH family.

It is found in the plastid. The protein localises to the chloroplast thylakoid membrane. In terms of biological role, possible role could be the docking of the LHC I antenna complex to the core complex. The polypeptide is Photosystem I reaction center subunit VI-1, chloroplastic (PSAH1) (Arabidopsis thaliana (Mouse-ear cress)).